Reading from the N-terminus, the 714-residue chain is Hormonally up-regulated neu tumor-associated kinase (714 aa).

Over residues 1–15 the composition is skewed to low complexity; sequence MPAAAGDGLLGEPAA. Positions 1–26 are disordered; that stretch reads MPAAAGDGLLGEPAAPGGGGGAEDAA. In terms of domain architecture, Protein kinase spans 62–320; that stretch reads LIGSRKLGEG…IQQALANRWL (259 aa). ATP contacts are provided by residues 68 to 76 and K91; that span reads LGEGSFAKV. The Proton acceptor role is filled by D186. A compositionally biased stretch (basic and acidic residues) spans 437-461; it reads KKPKEQEKRGDFLHRPFSKKLDKNL. Disordered stretches follow at residues 437-471, 518-552, and 590-660; these read KKPKEQEKRGDFLHRPFSKKLDKNLPSHKQPSGSL, MEFIPVPPPRTPRIVKKPEPHQPGPGSTGIPHKED, and ARRN…VKSR. Residues 599-611 are compositionally biased toward low complexity; the sequence is LSPGLPSGSMSPL. Basic and acidic residues predominate over residues 623 to 635; the sequence is AHEDKNSPPKEEG.

Belongs to the protein kinase superfamily. CAMK Ser/Thr protein kinase family. SNF1 subfamily.

It catalyses the reaction L-seryl-[protein] + ATP = O-phospho-L-seryl-[protein] + ADP + H(+). The enzyme catalyses L-threonyl-[protein] + ATP = O-phospho-L-threonyl-[protein] + ADP + H(+). This chain is Hormonally up-regulated neu tumor-associated kinase (HUNK), found in Pan troglodytes (Chimpanzee).